Reading from the N-terminus, the 142-residue chain is Large ribosomal subunit protein uL11 (142 aa).

The protein belongs to the universal ribosomal protein uL11 family. In terms of assembly, part of the ribosomal stalk of the 50S ribosomal subunit. Interacts with L10 and the large rRNA to form the base of the stalk. L10 forms an elongated spine to which L12 dimers bind in a sequential fashion forming a multimeric L10(L12)X complex. In terms of processing, one or more lysine residues are methylated.

Its function is as follows. Forms part of the ribosomal stalk which helps the ribosome interact with GTP-bound translation factors. The protein is Large ribosomal subunit protein uL11 of Shewanella frigidimarina (strain NCIMB 400).